Here is a 708-residue protein sequence, read N- to C-terminus: MLKLFSAFRKNKIWDFNGGIHPPEMKTQSNGTPLRQVPLAQRFVIPLKQHIGAEGELCVSVGDKVLRGQPLTRGRGKMLPVHAPTSGTVTAIAPHSTAHPSALAELSVIIDADGEDCWIPRDGWADYRSRSREELIERIHQFGVAGLGGAGFPTGVKLQGGGDKIETLIINAAECEPYITADDRLMQDCAAQVVEGIRILAHILQPREILIGIEDNKPQAISMLRAVLADSHDISLRVIPTKYPSGGAKQLTYILTGKQVPHGGRSSDIGVLMQNVGTAYAVKRAVIDGEPITERVVTLTGEAIARPGNVWARLGTPVRHLLNDAEFCPSADQMVIMGGPLMGFTLPWLDVPVVKITNCLLAPSANELGEPQEEQSCIRCSACADACPADLLPQQLYWFSKGQQHDKATTHNIADCIECGACAWVCPSNIPLVQYFRQEKAEIAAIRQEEKRAAEAKARFEARQARLEREKAARLERHKSAAVQPAAKDKDAIAAALARVKEKQAQATQPIVIKAGERPDNSAIIAAREARKAQARAKQAELQQTNDAATVADPRKTAVEAAIARAKARKLEQQQANAEPEEQIDPRKAAVEAAIARAKARKLEQQQANAEPEEQIDPRKAAVEAAIARAKARKLEQQQANAEPEEQIDPRKAAVEAAIARAKARKLEQQQANAEPEEQIDPRKAAVAAAIARVQAKKAAQQKVVNED.

4Fe-4S ferredoxin-type domains are found at residues 369–397 (GEPQEEQSCIRCSACADACPADLLPQQLY) and 407–436 (KATTHNIADCIECGACAWVCPSNIPLVQYF). [4Fe-4S] cluster-binding residues include Cys377, Cys380, Cys383, Cys387, Cys416, Cys419, Cys422, and Cys426. The disordered stretch occupies residues 630–682 (AKARKLEQQQANAEPEEQIDPRKAAVEAAIARAKARKLEQQQANAEPEEQIDP).

This sequence belongs to the 4Fe4S bacterial-type ferredoxin family. RnfC subfamily. The complex is composed of six subunits: RsxA, RsxB, RsxC, RsxD, RsxE and RsxG. Requires [4Fe-4S] cluster as cofactor.

Its subcellular location is the cell inner membrane. Its function is as follows. Part of a membrane-bound complex that couples electron transfer with translocation of ions across the membrane. Required to maintain the reduced state of SoxR. The sequence is that of Ion-translocating oxidoreductase complex subunit C from Escherichia coli O1:K1 / APEC.